We begin with the raw amino-acid sequence, 993 residues long: Isoleucine--tRNA ligase, mitochondrial (993 aa).

A mitochondrion-targeting transit peptide spans 1-29; the sequence is SLWGTPRLPCSPGWQGATKRLLVRSVSGA. Lys-55 is subject to N6-acetyllysine; alternate. Residue Lys-55 is modified to N6-succinyllysine; alternate. Residues 97–107 carry the 'HIGH' region motif; the sequence is PYANGDPHVGH. Lys-170 carries the post-translational modification N6-acetyllysine. Lys-175 is modified (N6-succinyllysine). An N6-acetyllysine modification is found at Lys-214. Lys-222 bears the N6-acetyllysine; alternate mark. The residue at position 222 (Lys-222) is an N6-succinyllysine; alternate. Residues Lys-460 and Lys-481 each carry the N6-succinyllysine modification. ATP is bound by residues Lys-645 and Lys-648. Positions 645 to 649 match the 'KMSKS' region motif; the sequence is KMSKS. Lys-706 carries the post-translational modification N6-acetyllysine. N6-acetyllysine; alternate occurs at positions 756 and 762. Lys-756 and Lys-762 each carry N6-succinyllysine; alternate.

It belongs to the class-I aminoacyl-tRNA synthetase family.

Its subcellular location is the mitochondrion matrix. The catalysed reaction is tRNA(Ile) + L-isoleucine + ATP = L-isoleucyl-tRNA(Ile) + AMP + diphosphate. Functionally, aminoacyl-tRNA synthetase that catalyzes the specific attachment of isoleucine to its cognate tRNA (tRNA(Ile)). The chain is Isoleucine--tRNA ligase, mitochondrial (IARS2) from Macaca fascicularis (Crab-eating macaque).